The chain runs to 295 residues: UDP-N-acetylenolpyruvoylglucosamine reductase (295 aa).

The FAD-binding PCMH-type domain maps to 23–188 (KVGGPADFLA…ISAKFALKPG (166 aa)). Arg167 is an active-site residue. Ser217 acts as the Proton donor in catalysis. Residue Glu287 is part of the active site.

Belongs to the MurB family. FAD is required as a cofactor.

It is found in the cytoplasm. The enzyme catalyses UDP-N-acetyl-alpha-D-muramate + NADP(+) = UDP-N-acetyl-3-O-(1-carboxyvinyl)-alpha-D-glucosamine + NADPH + H(+). Its pathway is cell wall biogenesis; peptidoglycan biosynthesis. In terms of biological role, cell wall formation. This is UDP-N-acetylenolpyruvoylglucosamine reductase from Streptococcus pyogenes serotype M49 (strain NZ131).